The primary structure comprises 215 residues: Thymidylate kinase (215 aa).

12–19 (GIDGAGKS) lines the ATP pocket.

Belongs to the thymidylate kinase family.

It catalyses the reaction dTMP + ATP = dTDP + ADP. Phosphorylation of dTMP to form dTDP in both de novo and salvage pathways of dTTP synthesis. The protein is Thymidylate kinase of Albidiferax ferrireducens (strain ATCC BAA-621 / DSM 15236 / T118) (Rhodoferax ferrireducens).